The primary structure comprises 105 residues: uncharacterized protein (105 aa).

Residues 14–104 form the ABM domain; it reads HYITACLKII…VEWLMKSNVN (91 aa).

This is an uncharacterized protein from Bacillus subtilis (strain 168).